The chain runs to 84 residues: Cell division topological specificity factor (84 aa).

Belongs to the MinE family.

Functionally, prevents the cell division inhibition by proteins MinC and MinD at internal division sites while permitting inhibition at polar sites. This ensures cell division at the proper site by restricting the formation of a division septum at the midpoint of the long axis of the cell. The protein is Cell division topological specificity factor of Chromohalobacter salexigens (strain ATCC BAA-138 / DSM 3043 / CIP 106854 / NCIMB 13768 / 1H11).